The following is a 119-amino-acid chain: U9-hexatoxin-Hi1 (119 aa).

Residues 1–17 (MKLYLVILVTSVALAAA) form the signal peptide. Positions 18–53 (SPTRTKEEPIEDELLEALLSVEKSLFNEETTVMEKR) are excised as a propeptide. 4 cysteine pairs are disulfide-bonded: C55/C73, C66/C79, C70/C117, and C72/C88.

It belongs to the neurotoxin 03 (Tx2) family. 03 subfamily. In terms of tissue distribution, expressed by the venom gland.

Its subcellular location is the secreted. Its function is as follows. Probable ion channel inhibitor. The chain is U9-hexatoxin-Hi1 from Hadronyche infensa (Fraser island funnel-web spider).